A 126-amino-acid chain; its full sequence is Holo-[acyl-carrier-protein] synthase (126 aa).

Mg(2+)-binding residues include D9 and E58.

It belongs to the P-Pant transferase superfamily. AcpS family. It depends on Mg(2+) as a cofactor.

Its subcellular location is the cytoplasm. The catalysed reaction is apo-[ACP] + CoA = holo-[ACP] + adenosine 3',5'-bisphosphate + H(+). In terms of biological role, transfers the 4'-phosphopantetheine moiety from coenzyme A to a Ser of acyl-carrier-protein. This Yersinia pestis bv. Antiqua (strain Angola) protein is Holo-[acyl-carrier-protein] synthase.